A 157-amino-acid chain; its full sequence is Methylamine utilization protein MauL (157 aa).

Its pathway is one-carbon metabolism; methylamine degradation. In terms of biological role, probably involved in TTQ prosthetic group biosynthesis. This is Methylamine utilization protein MauL (mauL) from Methylobacillus flagellatus (strain ATCC 51484 / DSM 6875 / VKM B-1610 / KT).